We begin with the raw amino-acid sequence, 546 residues long: Probable protein kinase UbiB (546 aa).

The Protein kinase domain occupies 124-502 (DFDIQPLASA…HVRQSQSRYL (379 aa)). Residues 130 to 138 (LASASIAQV) and lysine 153 contribute to the ATP site. The active-site Proton acceptor is the aspartate 288. 2 helical membrane-spanning segments follow: residues 501-521 (YLLGIGATLLLSGSFLLVNRP) and 522-542 (EWGLMPGWLMVGGVVVWLVGW).

It belongs to the ABC1 family. UbiB subfamily.

Its subcellular location is the cell inner membrane. It participates in cofactor biosynthesis; ubiquinone biosynthesis [regulation]. Its function is as follows. Is probably a protein kinase regulator of UbiI activity which is involved in aerobic coenzyme Q (ubiquinone) biosynthesis. The polypeptide is Probable protein kinase UbiB (Salmonella enteritidis PT4 (strain P125109)).